The primary structure comprises 114 residues: uncharacterized protein (114 aa).

Transmembrane regions (helical) follow at residues 21 to 41 (LASS…VCLF), 65 to 85 (GCFS…SALI), and 93 to 113 (LSVF…ILTD).

The protein localises to the membrane. This is an uncharacterized protein from Saccharomyces cerevisiae (strain ATCC 204508 / S288c) (Baker's yeast).